Here is a 580-residue protein sequence, read N- to C-terminus: Dihydroxy-acid dehydratase (580 aa).

Residues 1–31 (MPSGSSESPADALRASDSTPDIKPRSRDVTD) are disordered. A compositionally biased stretch (basic and acidic residues) spans 20–31 (PDIKPRSRDVTD). Cys69 is a [2Fe-2S] cluster binding site. Position 101 (Asp101) interacts with Mg(2+). [2Fe-2S] cluster is bound at residue Cys142. Residues Asp143 and Lys144 each coordinate Mg(2+). The residue at position 144 (Lys144) is an N6-carboxylysine. Cys219 provides a ligand contact to [2Fe-2S] cluster. Mg(2+) is bound at residue Glu470. The Proton acceptor role is filled by Ser496.

This sequence belongs to the IlvD/Edd family. In terms of assembly, homodimer. Requires [2Fe-2S] cluster as cofactor. Mg(2+) serves as cofactor.

It catalyses the reaction (2R)-2,3-dihydroxy-3-methylbutanoate = 3-methyl-2-oxobutanoate + H2O. It carries out the reaction (2R,3R)-2,3-dihydroxy-3-methylpentanoate = (S)-3-methyl-2-oxopentanoate + H2O. It participates in amino-acid biosynthesis; L-isoleucine biosynthesis; L-isoleucine from 2-oxobutanoate: step 3/4. Its pathway is amino-acid biosynthesis; L-valine biosynthesis; L-valine from pyruvate: step 3/4. Functions in the biosynthesis of branched-chain amino acids. Catalyzes the dehydration of (2R,3R)-2,3-dihydroxy-3-methylpentanoate (2,3-dihydroxy-3-methylvalerate) into 2-oxo-3-methylpentanoate (2-oxo-3-methylvalerate) and of (2R)-2,3-dihydroxy-3-methylbutanoate (2,3-dihydroxyisovalerate) into 2-oxo-3-methylbutanoate (2-oxoisovalerate), the penultimate precursor to L-isoleucine and L-valine, respectively. The sequence is that of Dihydroxy-acid dehydratase from Mycobacterium sp. (strain JLS).